The chain runs to 505 residues: Catalase (505 aa).

Residues 1 to 25 (MSRQDKKLTGVFGHPVSDRENSMTA) are disordered. Residues H56 and N129 contribute to the active site. Y339 contributes to the heme binding site.

It belongs to the catalase family. Homodimer. It depends on heme as a cofactor.

The enzyme catalyses 2 H2O2 = O2 + 2 H2O. Decomposes hydrogen peroxide into water and oxygen; serves to protect cells from the toxic effects of hydrogen peroxide. The sequence is that of Catalase (katA) from Staphylococcus aureus (strain MRSA252).